We begin with the raw amino-acid sequence, 400 residues long: Dehydrogenase efuE (400 aa).

NAD(+) is bound by residues 222–223, 303–305, and aspartate 329; these read AI and TAR. Arginine 305 is a catalytic residue. The active site involves glutamate 334. Histidine 352 (proton donor) is an active-site residue. 352 to 355 provides a ligand contact to NAD(+); the sequence is HLGG.

The protein belongs to the D-isomer specific 2-hydroxyacid dehydrogenase family.

The protein operates within secondary metabolite biosynthesis; terpenoid biosynthesis. In terms of biological role, dehydrogenase; part of the gene cluster that mediates the biosynthesis of enfumafungin, a glycosylated fernene-type triterpenoid with potent antifungal activity, mediated by its interaction with beta-1,3-glucan synthase and the fungal cell wall. The pathway begins with the terpene cyclase-glycosyl transferase fusion protein that most likely uses 2,3-oxidosqualene as substrate and catalyzes glycosylation immediately after cyclization. The fernene glycoside then could be processed by the desaturase efuI which catalyzes isomerization of a double bond established by efuA to form the core structure. The latter would then undergo a series of hydroxylations in unknown order at C-2, C-19, C-23 and C-25, which would be catalyzed by two of the three cytochrome P450 monooxygenases efuB, efuG or efuH. The hydroxy-group at C-25 becomes oxidized by the dehydrogenase efuE to enable a spontaneous, non-enzymatic hemiacetal formation with C-23. After hydroxylation at C-2, acetylation by the acetyltransferase efuC takes place. The final steps in enfumafungin biosynthesis require expansion of the 5-membered ring by lactonization via a Baeyer-Villiger reaction mediated by one of the BGC's cytochrome P450 monooxygenases (efuB, efuG or efuH) followed by ring cleavage. This type of reaction would establish a double bond between C-20 and C-21 which could be reduced by the reductase efuL to form the final product. The protein is Dehydrogenase efuE of Hormonema carpetanum.